The primary structure comprises 817 residues: Exocyst complex component 6 (817 aa).

Coiled-coil stretches lie at residues 87-149 (QSFV…DQIA) and 247-270 (TDAE…EIEV).

This sequence belongs to the SEC15 family. As to quaternary structure, the exocyst complex is composed of sec-3/exoc1, sec-5/exoc2, sec-6/exoc3, sec-8/exoc4, sec-10/exoc5, sec-15/exoc6, exo-70/exoc7 and exo-84/exoc8.

Component of the exocyst complex involved in the docking of exocytic vesicles with fusion sites on the plasma membrane. This chain is Exocyst complex component 6 (sec-15), found in Caenorhabditis elegans.